The following is a 436-amino-acid chain: 3-ketoacyl-CoA thiolase (436 aa).

Catalysis depends on Cys-99, which acts as the Acyl-thioester intermediate. Active-site proton acceptor residues include His-392 and Cys-422.

It belongs to the thiolase-like superfamily. Thiolase family. In terms of assembly, heterotetramer of two alpha chains (FadJ) and two beta chains (FadI).

The protein resides in the cytoplasm. The catalysed reaction is an acyl-CoA + acetyl-CoA = a 3-oxoacyl-CoA + CoA. Its pathway is lipid metabolism; fatty acid beta-oxidation. Functionally, catalyzes the final step of fatty acid oxidation in which acetyl-CoA is released and the CoA ester of a fatty acid two carbons shorter is formed. This chain is 3-ketoacyl-CoA thiolase, found in Shigella flexneri.